A 92-amino-acid polypeptide reads, in one-letter code: DNA-directed RNA polymerase subunit Rpo11 (92 aa).

It belongs to the archaeal Rpo11/eukaryotic RPB11/RPC19 RNA polymerase subunit family. As to quaternary structure, part of the RNA polymerase complex.

Its subcellular location is the cytoplasm. The catalysed reaction is RNA(n) + a ribonucleoside 5'-triphosphate = RNA(n+1) + diphosphate. DNA-dependent RNA polymerase (RNAP) catalyzes the transcription of DNA into RNA using the four ribonucleoside triphosphates as substrates. This is DNA-directed RNA polymerase subunit Rpo11 from Methanosarcina acetivorans (strain ATCC 35395 / DSM 2834 / JCM 12185 / C2A).